Here is a 55-residue protein sequence, read N- to C-terminus: Large ribosomal subunit protein bL33 (55 aa).

The protein belongs to the bacterial ribosomal protein bL33 family.

This chain is Large ribosomal subunit protein bL33 (rpmG), found in Buchnera aphidicola subsp. Acyrthosiphon pisum (strain APS) (Acyrthosiphon pisum symbiotic bacterium).